We begin with the raw amino-acid sequence, 313 residues long: Ribosomal RNA small subunit methyltransferase H (313 aa).

Residues 35 to 37 (GGH), aspartate 55, phenylalanine 81, aspartate 103, and glutamine 110 contribute to the S-adenosyl-L-methionine site.

It belongs to the methyltransferase superfamily. RsmH family.

Its subcellular location is the cytoplasm. It carries out the reaction cytidine(1402) in 16S rRNA + S-adenosyl-L-methionine = N(4)-methylcytidine(1402) in 16S rRNA + S-adenosyl-L-homocysteine + H(+). Its function is as follows. Specifically methylates the N4 position of cytidine in position 1402 (C1402) of 16S rRNA. The sequence is that of Ribosomal RNA small subunit methyltransferase H from Pseudomonas syringae pv. tomato (strain ATCC BAA-871 / DC3000).